The sequence spans 79 residues: CDC42 small effector protein 1 (79 aa).

2 S-palmitoyl cysteine lipidation sites follow: Cys-10 and Cys-11. The CRIB domain maps to 30–43 (IGEPMNFVHLTHIG). The disordered stretch occupies residues 48 to 79 (GAGDGLAMTGAVQEQMRSKGNRDRPWSNSRGL). The segment covering 63–72 (MRSKGNRDRP) has biased composition (basic and acidic residues).

It belongs to the CDC42SE/SPEC family. As to quaternary structure, interacts with CDC42 (in GTP-bound form). Interacts weakly with RAC1 and not at all with RHOA.

The protein localises to the cytoplasm. It localises to the cytoskeleton. The protein resides in the cell membrane. Functionally, probably involved in the organization of the actin cytoskeleton by acting downstream of CDC42, inducing actin filament assembly. Alters CDC42-induced cell shape changes. In activated T-cells, may play a role in CDC42-mediated F-actin accumulation at the immunological synapse. May play a role in early contractile events in phagocytosis in macrophages. The chain is CDC42 small effector protein 1 (CDC42SE1) from Pongo abelii (Sumatran orangutan).